A 408-amino-acid chain; its full sequence is E3 ubiquitin-protein ligase IE2 (408 aa).

Polar residues predominate over residues 1–10 (MSRQINAATP). Disordered stretches follow at residues 1 to 67 (MSRQ…ENVQ) and 176 to 199 (QSPD…QSEP). A compositionally biased stretch (basic residues) spans 13 to 25 (SRRHRLSLSRRRI). A compositionally biased stretch (low complexity) spans 30 to 47 (SPEAQPSSSSRSQPSSSS). 4 repeat units span residues 34–41 (QPSSSSRS), 42–49 (QPSSSSRS), 51–54 (RRQE), and 55–58 (RRQE). The 2 X 8 AA tandem repeats of Q-P-S-S-S-S-R-S stretch occupies residues 34–49 (QPSSSSRSQPSSSSRS). The interval 51 to 58 (RRQERRQE) is 2 X 4 AA tandem repeats of R-R-Q-E. The segment covering 183-197 (SPQSPQPQQQQQQQS) has biased composition (low complexity). The RING-type zinc-finger motif lies at 207–255 (CNICFTTFKDTKNVNSSFVTSIHCNHAVCFKCYVKIIMDNSVYKCFCSA).

Belongs to the alphabaculovirus IE2 protein family. In terms of assembly, homooligomer. Auto-ubiquitinated.

The protein resides in the host nucleus. It carries out the reaction S-ubiquitinyl-[E2 ubiquitin-conjugating enzyme]-L-cysteine + [acceptor protein]-L-lysine = [E2 ubiquitin-conjugating enzyme]-L-cysteine + N(6)-ubiquitinyl-[acceptor protein]-L-lysine.. Functionally, RING-finger E3 ubiquitin ligase that plays an important regulatory role during the initial stages of infection. Migrates to specific nuclear foci early in infection supposely to prepare the sites for viral transcription and replication by targeting and ubiquitinating host proteins. Acts as a transcriptional activator and activates a number of viral promoters including itself, IE1 and the promoter of 39K gene. This chain is E3 ubiquitin-protein ligase IE2 (IE2), found in Lepidoptera (butterflies and moths).